The sequence spans 420 residues: Glutamate-1-semialdehyde 2,1-aminomutase (420 aa).

At Lys261 the chain carries N6-(pyridoxal phosphate)lysine.

Belongs to the class-III pyridoxal-phosphate-dependent aminotransferase family. HemL subfamily. Pyridoxal 5'-phosphate is required as a cofactor.

It localises to the cytoplasm. It carries out the reaction (S)-4-amino-5-oxopentanoate = 5-aminolevulinate. It participates in porphyrin-containing compound metabolism; protoporphyrin-IX biosynthesis; 5-aminolevulinate from L-glutamyl-tRNA(Glu): step 2/2. The polypeptide is Glutamate-1-semialdehyde 2,1-aminomutase (Thermoplasma volcanium (strain ATCC 51530 / DSM 4299 / JCM 9571 / NBRC 15438 / GSS1)).